Reading from the N-terminus, the 162-residue chain is Caveolin-2 (162 aa).

The Cytoplasmic segment spans residues 1–86 (MGLETEKADV…FEISKYVMYK (86 aa)). Tyrosine 19 carries the post-translational modification Phosphotyrosine; by SRC. Phosphoserine is present on residues serine 20 and serine 23. At tyrosine 27 the chain carries Phosphotyrosine; by SRC. Serine 36 is modified (phosphoserine). The segment at residues 87–107 (FLTVFLAIPLAFIAGILFATL) is an intramembrane region (helical). The Cytoplasmic portion of the chain corresponds to 108–162 (SCLHIWILMPFVKTCLMVLPSVQTIWKSVTDVIIAPLCTSVGRSFSSVSLQLSQD).

This sequence belongs to the caveolin family. In terms of assembly, monomer or homodimer. Interacts with CAV1; the interaction forms a stable heterooligomeric complex that is required for targeting to lipid rafts and for caveolae formation. Tyrosine phosphorylated forms do not form heterooligomers with the Tyr-19-phosphorylated form existing as a monomer or dimer, and the Tyr-27-form as a monomer only. Interacts (tyrosine phosphorylated form) with the SH2 domain-containing proteins, RASA1, NCK1 and SRC. Interacts (tyrosine phosphorylated form) with INSR, the interaction (Tyr-27-phosphorylated form) is increased on insulin stimulation. Interacts (Tyr-19 phosphorylated form) with MAPK1 (phosphorylated form); the interaction, promoted by insulin, leads to nuclear location and MAPK1 activation. Interacts with STAT3; the interaction is increased on insulin-induced tyrosine phosphorylation leading to STAT activation. In terms of processing, phosphorylated on serine and tyrosine residues. CAV1 promotes phosphorylation on Ser-23 which then targets the complex to the plasma membrane, lipid rafts and caveolae. Phosphorylation on Ser-36 appears to modulate mitosis in endothelial cells. Phosphorylation on both Tyr-19 and Tyr-27 is required for insulin-induced 'Ser-727' phosphorylation of STAT3 and its activation. Phosphorylation on Tyr-19 is required for insulin-induced phosphorylation of MAPK1 and DNA binding of STAT3. Tyrosine phosphorylation is induced by both EGF and insulin (By. similarity).

Its subcellular location is the nucleus. It localises to the cytoplasm. The protein resides in the golgi apparatus membrane. It is found in the cell membrane. The protein localises to the membrane. Its subcellular location is the caveola. May act as a scaffolding protein within caveolar membranes. Interacts directly with G-protein alpha subunits and can functionally regulate their activity. Acts as an accessory protein in conjunction with CAV1 in targeting to lipid rafts and driving caveolae formation. The Ser-36 phosphorylated form has a role in modulating mitosis in endothelial cells. Positive regulator of cellular mitogenesis of the MAPK signaling pathway. Required for the insulin-stimulated nuclear translocation and activation of MAPK1 and STAT3, and the subsequent regulation of cell cycle progression. The chain is Caveolin-2 (CAV2) from Pongo abelii (Sumatran orangutan).